The following is a 100-amino-acid chain: Replication restart protein PriB (100 aa).

The SSB domain occupies 4–99; it reads TNLVSLAALI…LRIQNIKEYK (96 aa).

It belongs to the PriB family. As to quaternary structure, homodimer. Component of the replication restart primosome. Primosome assembly occurs via a 'hand-off' mechanism. PriA binds to replication forks, subsequently PriB then DnaT bind; DnaT then displaces ssDNA to generate the helicase loading substrate. Interacts with PriA with high affinity, independent of DNA presence.

With respect to regulation, priA:PriB complex-catalyzed duplex DNA winding is inhibited by CGS 15943 (CHEBI:131351); PriA is the drug target. Stimulates the DNA unwinding activity of PriA helicase, which does not seem to require single-stranded (ss)DNA-binding by PriB. Activates DNA-dependent ATP hydrolysis catalyzed by PriA. Weakly binds ssDNA. Weakly binds double-stranded (ds)DNA, a partial duplex DNA with a 3' ssDNA overhang, and a forked DNA structure with fully duplex leading and lagging strand arms in vitro. Functionally, involved in the restart of stalled replication forks, which reloads the replicative helicase on sites other than the origin of replication; the PriA-PriB pathway is the major replication restart pathway. During primosome assembly it facilitates complex formation between PriA and DnaT on DNA; stabilizes PriA on DNA. Stimulates the DNA unwinding activity of PriA helicase. This is Replication restart protein PriB from Neisseria gonorrhoeae (strain ATCC 700825 / FA 1090).